The following is a 398-amino-acid chain: Cytohesin-1 (398 aa).

Met1 is subject to N-acetylmethionine. The necessary for localization at adherens junction stretch occupies residues 1–60 (MEDDDSYVPSDLTAEERQELENIRRRKQELLADIQRLKEEIAEVANEIESLGSTEERKNM). Residues 10–67 (SDLTAEERQELENIRRRKQELLADIQRLKEEIAEVANEIESLGSTEERKNMQRNKQVA) adopt a coiled-coil conformation. An SEC7 domain is found at 73 to 202 (FNMDPKKGIQ…IIMLNTSLHN (130 aa)). One can recognise a PH domain in the interval 260 to 377 (NPDREGWLLK…WIKCIKAAIS (118 aa)). A 1,2-diacyl-sn-glycero-3-phospho-(1D-myo-inositol-3,4,5-trisphosphate) contacts are provided by residues 269–277 (KLGGGRVKT), Arg281, Tyr292, Arg302, and Asn351. A C-terminal autoinhibitory region region spans residues 388–396 (RKKKVSSTK).

In terms of assembly, interacts with TRIM23 and CYTIP. Interacts (via coiled-coil domain) with FRMD4A (via coiled-coil domain). Interacts with FRMD4B. Found in a complex with PARD3, CYTH1 and FRMD4A. Interacts (via N-terminal domain) with INAVA (via N-terminal domain). Post-translationally, ubiquitinated by SCF(FBXW11) E3 ubiquitin-protein ligase complex. Ubiquitination induces proteasomal degradation. Expressed in colon and small intestine (at protein level).

It localises to the cell membrane. Its subcellular location is the cytoplasm. The protein resides in the cytosol. It is found in the cell junction. The protein localises to the tight junction. It localises to the adherens junction. Functionally, promotes guanine-nucleotide exchange on ARF1, ARF5 and ARF6. Promotes the activation of ARF factors through replacement of GDP with GTP. Plays an important role in membrane trafficking, during junctional remodeling and epithelial polarization, through regulation of ARF6 activity. The sequence is that of Cytohesin-1 (Cyth1) from Mus musculus (Mouse).